The following is an 83-amino-acid chain: Putative regulatory protein FMG_0656 (83 aa).

Belongs to the RemA family.

The chain is Putative regulatory protein FMG_0656 from Finegoldia magna (strain ATCC 29328 / DSM 20472 / WAL 2508) (Peptostreptococcus magnus).